Consider the following 524-residue polypeptide: GMP synthase [glutamine-hydrolyzing] (524 aa).

One can recognise a Glutamine amidotransferase type-1 domain in the interval 5–195 (KVIVIDFGGQ…VRGVCGCAGT (191 aa)). Residue Cys82 is the Nucleophile of the active site. Active-site residues include His169 and Glu171. In terms of domain architecture, GMPS ATP-PPase spans 196–389 (WKMDAFVENT…LGIPEHLVFR (194 aa)). 223–229 (SGGVDSS) lines the ATP pocket.

In terms of assembly, homodimer.

The catalysed reaction is XMP + L-glutamine + ATP + H2O = GMP + L-glutamate + AMP + diphosphate + 2 H(+). It functions in the pathway purine metabolism; GMP biosynthesis; GMP from XMP (L-Gln route): step 1/1. In terms of biological role, catalyzes the synthesis of GMP from XMP. The sequence is that of GMP synthase [glutamine-hydrolyzing] from Lachnospira eligens (strain ATCC 27750 / DSM 3376 / VPI C15-48 / C15-B4) (Eubacterium eligens).